A 249-amino-acid chain; its full sequence is Methionine aminopeptidase (249 aa).

Substrate is bound at residue His-77. A divalent metal cation is bound by residues Asp-94, Asp-105, and His-168. His-175 is a substrate binding site. A divalent metal cation contacts are provided by Glu-201 and Glu-232.

It belongs to the peptidase M24A family. Methionine aminopeptidase type 1 subfamily. Monomer. It depends on Co(2+) as a cofactor. Requires Zn(2+) as cofactor. The cofactor is Mn(2+). Fe(2+) is required as a cofactor.

It catalyses the reaction Release of N-terminal amino acids, preferentially methionine, from peptides and arylamides.. Its function is as follows. Removes the N-terminal methionine from nascent proteins. The N-terminal methionine is often cleaved when the second residue in the primary sequence is small and uncharged (Met-Ala-, Cys, Gly, Pro, Ser, Thr, or Val). Requires deformylation of the N(alpha)-formylated initiator methionine before it can be hydrolyzed. The chain is Methionine aminopeptidase from Clostridium perfringens (strain 13 / Type A).